We begin with the raw amino-acid sequence, 209 residues long: Ribosomal RNA large subunit methyltransferase E (209 aa).

S-adenosyl-L-methionine-binding residues include glycine 63, tryptophan 65, aspartate 83, aspartate 99, and aspartate 124. The active-site Proton acceptor is the lysine 164.

This sequence belongs to the class I-like SAM-binding methyltransferase superfamily. RNA methyltransferase RlmE family.

It is found in the cytoplasm. The enzyme catalyses uridine(2552) in 23S rRNA + S-adenosyl-L-methionine = 2'-O-methyluridine(2552) in 23S rRNA + S-adenosyl-L-homocysteine + H(+). In terms of biological role, specifically methylates the uridine in position 2552 of 23S rRNA at the 2'-O position of the ribose in the fully assembled 50S ribosomal subunit. This chain is Ribosomal RNA large subunit methyltransferase E, found in Aliivibrio fischeri (strain ATCC 700601 / ES114) (Vibrio fischeri).